We begin with the raw amino-acid sequence, 468 residues long: Argininosuccinate lyase (468 aa).

It belongs to the lyase 1 family. Argininosuccinate lyase subfamily.

The protein resides in the cytoplasm. The catalysed reaction is 2-(N(omega)-L-arginino)succinate = fumarate + L-arginine. The protein operates within amino-acid biosynthesis; L-arginine biosynthesis; L-arginine from L-ornithine and carbamoyl phosphate: step 3/3. The chain is Argininosuccinate lyase from Sphingopyxis alaskensis (strain DSM 13593 / LMG 18877 / RB2256) (Sphingomonas alaskensis).